A 44-amino-acid polypeptide reads, in one-letter code: Mu-conotoxin-like Cal 12.1.3b (44 aa).

Cystine bridges form between Cys3–Cys16, Cys11–Cys28, Cys18–Cys33, and Cys27–Cys38. Position 23 is a 4-hydroxyproline (Pro23). Trp36 and Trp37 each carry 6'-bromotryptophan. The residue at position 39 (Pro39) is a 4-hydroxyproline. Trp43 carries the post-translational modification 6'-bromotryptophan.

As to expression, expressed by the venom duct.

It localises to the secreted. Functionally, mu-conotoxins block voltage-gated sodium channels. This toxin reversibly blocks voltage-gated sodium channel in cephalopods, with no alteration in the voltage dependence of sodium conductance or on the kinetics of inactivation. This is Mu-conotoxin-like Cal 12.1.3b from Californiconus californicus (California cone).